Here is a 595-residue protein sequence, read N- to C-terminus: MNVRNFSIIAHVDHGKSTLADRILERLGAMGERDKRDQTLDTLELERERGITIKSTPIRLTYRRANGEEYTFNLIDTPGHVDFGYEVSRSLAACEGVLLLVDASQGVEAQTIVNAYLAIDNNLEIIPVVNKIDLPAADPEGAAQELEEVIGIPAEEAVFASGKTGQGVDQILEAIVERIPPPPGDPQAPLKALIFDSFYDAYQGVILFVRVLEGTLKPKQKIMLFSNGKSFEVDKVGTFSPGLVVGDALSAGAVGWVAASIKDIHDAQVGDTITEKDRPTAEPFPGFKPAQPVVFSGLYPTDTEDYRKLREALEKLKLNDAAFTFEPETSEALGFGFRCGFLGLLHAEIVQERLEREFDLDLIATAPAVVYRVTLTNGEVFETQNPAEFPTRDRIARVEEPYIKLSIMLPEEYVGPVMQLLQERRGNMVTMNYVGKRVELIYEVPFAEILYDFHDRLKSISRGYASMDYEQIGYREGDLRKVDILVNGEVVDALAVIVHEDKAYSLGRKIVDKMAEVIPRQLFPVPVQAAIGGKIIARATVKAYRKDVLAKCYGGDITRKKKLLEKQKKGRARMKQIGTVEVPQEAFLAVLSTEE.

Residues M1–P183 enclose the tr-type G domain. GTP contacts are provided by residues D13–T18 and N130–D133.

Belongs to the TRAFAC class translation factor GTPase superfamily. Classic translation factor GTPase family. LepA subfamily.

Its subcellular location is the cell membrane. It carries out the reaction GTP + H2O = GDP + phosphate + H(+). Required for accurate and efficient protein synthesis under certain stress conditions. May act as a fidelity factor of the translation reaction, by catalyzing a one-codon backward translocation of tRNAs on improperly translocated ribosomes. Back-translocation proceeds from a post-translocation (POST) complex to a pre-translocation (PRE) complex, thus giving elongation factor G a second chance to translocate the tRNAs correctly. Binds to ribosomes in a GTP-dependent manner. The protein is Elongation factor 4 of Deinococcus geothermalis (strain DSM 11300 / CIP 105573 / AG-3a).